Reading from the N-terminus, the 310-residue chain is Olfactory receptor 8B12 (310 aa).

Topologically, residues 1-24 (MAAKNSSVTEFILEGLTHQPGLRI) are extracellular. Residue N5 is glycosylated (N-linked (GlcNAc...) asparagine). A helical membrane pass occupies residues 25–45 (PLFFLFLGFYTVTVVGNLGLI). Residues 46–53 (TLIGLNSH) are Cytoplasmic-facing. Residues 54-74 (LHTPMYFFLFNLSLIDFCFST) traverse the membrane as a helical segment. Over 75–98 (TITPKMLMSFVSRKNIISFTGCMT) the chain is Extracellular. C96 and C188 form a disulfide bridge. Residues 99-119 (QLFFFCFFVVSESFILSAMAY) traverse the membrane as a helical segment. Residues 120-138 (DRYVAICNPLLYTVTMSCQ) lie on the Cytoplasmic side of the membrane. Residues 139 to 159 (VCLLLLLGAYGMGFAGAMAHT) form a helical membrane-spanning segment. The Extracellular portion of the chain corresponds to 160–196 (GSIMNLTFCADNLVNHFMCDILPLLELSCNSSYMNEL). N164 and N189 each carry an N-linked (GlcNAc...) asparagine glycan. Residues 197–216 (VVFIVVAVDVGMPIVTVFIS) form a helical membrane-spanning segment. Over 217 to 236 (YALILSSILHNSSTEGRSKA) the chain is Cytoplasmic. Residues 237-257 (FSTCSSHIIVVSLFFGSGAFM) form a helical membrane-spanning segment. Over 258–270 (YLKPLSILPLEQG) the chain is Extracellular. The helical transmembrane segment at 271-291 (KVSSLFYTIIVPVLNPLIYSL) threads the bilayer. Over 292–310 (RNKDVKVALRRTLGRKIFS) the chain is Cytoplasmic.

It belongs to the G-protein coupled receptor 1 family.

It localises to the cell membrane. Odorant receptor. The chain is Olfactory receptor 8B12 (OR8B12) from Homo sapiens (Human).